Here is a 476-residue protein sequence, read N- to C-terminus: MGGARKPRTLAEKVWDDHVVVAGQGYHQDRGPDLIYIDLHLVHEVTSPQAFDGLRLAGRWVRRPDLTVATEDHNVPTVDIDKPIADPVSRIQVETLRRNCAEFGVRLHPMGDIEQGIVHVVGPQLGLTQPGMTIVCGDSHTSTHGAFGAIAMGIGTSEIEHVLATQTLPLRPFKTMAVTVDGRLPAGVTAKDIILALIAKIGTGGGQGYVLEYRGSVIESMSMEGRMTICNMSIEAGARAGMVAPDETTYEFLRDRPHAPTGKQWDAAVAYWQQLRTDDDAVFDTEVYLDATSLSPFVTWGTNPGQGVPLAASVPDPELMIDDVARQAAEKALAYMDLRPGTPMRDIAVDAVFVGSCTNGRIEDLRLVADVLRGHKVADGVRMLIVPGSMRVRAQAEAEGLGEIFITAGAQWRQPGCSMCLGMNPDQLAPGERCAATSNRNFEGRQGKGGRTHLVSPAVAAATAVRGTFSAPADLN.

[4Fe-4S] cluster contacts are provided by C357, C417, and C420.

The protein belongs to the aconitase/IPM isomerase family. LeuC type 1 subfamily. As to quaternary structure, heterodimer of LeuC and LeuD. Requires [4Fe-4S] cluster as cofactor.

It catalyses the reaction (2R,3S)-3-isopropylmalate = (2S)-2-isopropylmalate. It participates in amino-acid biosynthesis; L-leucine biosynthesis; L-leucine from 3-methyl-2-oxobutanoate: step 2/4. In terms of biological role, catalyzes the isomerization between 2-isopropylmalate and 3-isopropylmalate, via the formation of 2-isopropylmaleate. This is 3-isopropylmalate dehydratase large subunit from Mycobacterium leprae (strain TN).